We begin with the raw amino-acid sequence, 330 residues long: Cathepsin S (330 aa).

Residues 1-17 (MKQLVCVLFVCSSAVTQ) form the signal peptide. Residues 18–114 (LHKDPTLDHH…ITYKSNPNQM (97 aa)) constitute a propeptide, activation peptide. An N-linked (GlcNAc...) asparagine glycan is attached at Asn-104. Cystine bridges form between Cys-126-Cys-223, Cys-136-Cys-179, Cys-170-Cys-212, and Cys-271-Cys-319. Residue Cys-139 is part of the active site. Active-site residues include His-277 and Asn-297.

This sequence belongs to the peptidase C1 family.

Its subcellular location is the lysosome. It is found in the secreted. The protein resides in the cytoplasmic vesicle. The protein localises to the phagosome. The catalysed reaction is Similar to cathepsin L, but with much less activity on Z-Phe-Arg-|-NHMec, and more activity on the Z-Val-Val-Arg-|-Xaa compound.. In terms of biological role, thiol protease. Key protease responsible for the removal of the invariant chain from MHC class II molecules and MHC class II antigen presentation. The bond-specificity of this proteinase is in part similar to the specificities of cathepsin L. The chain is Cathepsin S (CTSS) from Saimiri boliviensis boliviensis (Bolivian squirrel monkey).